A 120-amino-acid chain; its full sequence is Peptidyl-tRNA hydrolase (120 aa).

The protein belongs to the PTH2 family. In terms of assembly, homodimer.

Its subcellular location is the cytoplasm. It catalyses the reaction an N-acyl-L-alpha-aminoacyl-tRNA + H2O = an N-acyl-L-amino acid + a tRNA + H(+). In terms of biological role, the natural substrate for this enzyme may be peptidyl-tRNAs which drop off the ribosome during protein synthesis. The polypeptide is Peptidyl-tRNA hydrolase (Saccharolobus solfataricus (strain ATCC 35092 / DSM 1617 / JCM 11322 / P2) (Sulfolobus solfataricus)).